Reading from the N-terminus, the 257-residue chain is Ribosomal RNA small subunit methyltransferase A (257 aa).

Residues His-12, Leu-14, Gly-39, Glu-60, Asp-83, and Asn-101 each coordinate S-adenosyl-L-methionine.

The protein belongs to the class I-like SAM-binding methyltransferase superfamily. rRNA adenine N(6)-methyltransferase family. RsmA subfamily.

It is found in the cytoplasm. The enzyme catalyses adenosine(1518)/adenosine(1519) in 16S rRNA + 4 S-adenosyl-L-methionine = N(6)-dimethyladenosine(1518)/N(6)-dimethyladenosine(1519) in 16S rRNA + 4 S-adenosyl-L-homocysteine + 4 H(+). In terms of biological role, specifically dimethylates two adjacent adenosines (A1518 and A1519) in the loop of a conserved hairpin near the 3'-end of 16S rRNA in the 30S particle. May play a critical role in biogenesis of 30S subunits. This chain is Ribosomal RNA small subunit methyltransferase A, found in Nitrosomonas europaea (strain ATCC 19718 / CIP 103999 / KCTC 2705 / NBRC 14298).